Reading from the N-terminus, the 154-residue chain is Large ribosomal subunit protein bL9 (154 aa).

It belongs to the bacterial ribosomal protein bL9 family.

Its function is as follows. Binds to the 23S rRNA. The chain is Large ribosomal subunit protein bL9 from Buchnera aphidicola subsp. Baizongia pistaciae (strain Bp).